Reading from the N-terminus, the 1449-residue chain is DNA polymerase III PolC-type (1449 aa).

The interval 194–231 (AQEKPVKKESSDNKHKSNGGNKGGYEKKSYKDEPKNEN) is disordered. Basic and acidic residues-rich tracts occupy residues 197–208 (KPVKKESSDNKH) and 217–229 (GYEK…EPKN). Residues 435–590 (YVVFDIETTG…DDAKATAEIL (156 aa)) form the Exonuclease domain.

It belongs to the DNA polymerase type-C family. PolC subfamily.

The protein localises to the cytoplasm. It carries out the reaction DNA(n) + a 2'-deoxyribonucleoside 5'-triphosphate = DNA(n+1) + diphosphate. Required for replicative DNA synthesis. This DNA polymerase also exhibits 3' to 5' exonuclease activity. This chain is DNA polymerase III PolC-type, found in Clostridium perfringens (strain 13 / Type A).